Reading from the N-terminus, the 474-residue chain is Protein FAM161A (474 aa).

Disordered stretches follow at residues 78-126, 185-210, and 308-364; these read SSSS…PGEI, QKRR…DDAE, and REEL…DQGL. Residues 188–250 adopt a coiled-coil conformation; the sequence is REKASDAQET…KKTRERSKAA (63 aa). The interval 274–454 is required for interaction with CFAP418; that stretch reads KLRELCRAKK…PTASSRGREQ (181 aa). Positions 325-335 are enriched in polar residues; that stretch reads LQSSPWPSHST. Residues K397 and K413 each participate in a glycyl lysine isopeptide (Lys-Gly) (interchain with G-Cter in SUMO2) cross-link. A disordered region spans residues 412 to 474; it reads LKETRRPNPS…KELARIGGAR (63 aa). The span at 422-431 shows a compositional bias: basic residues; sequence PRHKSPRRSA. The span at 450–468 shows a compositional bias: basic and acidic residues; sequence RGREQAIRRSEKARMKELA.

This sequence belongs to the FAM161 family. As to quaternary structure, interacts (via central region) with CFAP418 (via N-terminus); the interaction is direct. Interacts (via C-terminus) with microtubules. Interacts with LCA5. Interacts with CEP290. Interacts with SDCCAG8. Interacts with FAM161B. Interacts with POC1B. Interacts with CEP78. Forms a microtubule-associated complex with POC5, CETN2 and POC1B. Interacts with CCDC15. In terms of tissue distribution, expressed in the retina and kidney.

It is found in the cytoplasm. It localises to the cytoskeleton. The protein localises to the cilium basal body. Its subcellular location is the cell projection. The protein resides in the cilium. It is found in the microtubule organizing center. It localises to the centrosome. The protein localises to the centriole. Its function is as follows. Involved in ciliogenesis. The chain is Protein FAM161A from Rattus norvegicus (Rat).